Consider the following 130-residue polypeptide: Small ribosomal subunit protein uS8 (130 aa).

This sequence belongs to the universal ribosomal protein uS8 family. As to quaternary structure, part of the 30S ribosomal subunit. Contacts proteins S5 and S12.

Functionally, one of the primary rRNA binding proteins, it binds directly to 16S rRNA central domain where it helps coordinate assembly of the platform of the 30S subunit. The protein is Small ribosomal subunit protein uS8 of Yersinia pseudotuberculosis serotype O:1b (strain IP 31758).